Here is a 299-residue protein sequence, read N- to C-terminus: MQAIILGSAAGGGVPQWNCRCPHCTMAWAGDARVKPRTQSSLAVSPDGETWLLVNASPDIRQQLFATPALHPARGLRHSPIAAVLLTNGDVDHVAGLLTLRESQPFRLHATRNILDSVSANRVFDVLAPEHVARREVALDESFAPVPGLAVTLFAVPGKVPLWLEEGTPEIGQETETTVGALIEAGGKRLAYVPGCARVTDDLRRRLSGVDVLLFDGTVYLDDDMIRAGVGTKTGWRMGHVPMTGEGGAIAALAEVPIGRRIFVHINNTNPVLVEESEARRAVEAEGWTVAHDGLTLTL.

This sequence belongs to the PqqB family.

It participates in cofactor biosynthesis; pyrroloquinoline quinone biosynthesis. Functionally, may be involved in the transport of PQQ or its precursor to the periplasm. The chain is Coenzyme PQQ synthesis protein B from Methylobacterium sp. (strain 4-46).